The sequence spans 216 residues: uncharacterized protein (216 aa).

This is an uncharacterized protein from Acanthamoeba polyphaga mimivirus (APMV).